A 148-amino-acid polypeptide reads, in one-letter code: Putative anti-anti-sigma factor Rv2638 (148 aa).

One can recognise an STAS domain in the interval 30-141 (LRATTDGSGA…PTVDTALGKG (112 aa)).

This sequence belongs to the anti-sigma-factor antagonist family. Interacts with unphosphorylated OprA.

This is Putative anti-anti-sigma factor Rv2638 from Mycobacterium tuberculosis (strain ATCC 25618 / H37Rv).